Consider the following 103-residue polypeptide: Histone H4 variant TH091 (103 aa).

Residues 1–20 (MSGRDKGGKGLGKGGAKRHR) form a disordered region. An N-acetylserine modification is found at Ser-2. N6-acetyllysine is present on residues Lys-6, Lys-9, Lys-13, Lys-17, and Lys-21. A DNA-binding region spans residues 17–21 (KRHRK).

It belongs to the histone H4 family. The nucleosome is a histone octamer containing two molecules each of H2A, H2B, H3 and H4 assembled in one H3-H4 heterotetramer and two H2A-H2B heterodimers. The octamer wraps approximately 147 bp of DNA.

It localises to the nucleus. Its subcellular location is the chromosome. Functionally, core component of nucleosome. Nucleosomes wrap and compact DNA into chromatin, limiting DNA accessibility to the cellular machineries which require DNA as a template. Histones thereby play a central role in transcription regulation, DNA repair, DNA replication and chromosomal stability. DNA accessibility is regulated via a complex set of post-translational modifications of histones, also called histone code, and nucleosome remodeling. In Triticum aestivum (Wheat), this protein is Histone H4 variant TH091.